Reading from the N-terminus, the 205-residue chain is Octanoyltransferase (205 aa).

The BPL/LPL catalytic domain occupies 29-204 (AETPDEIWIV…HLLQQLDQKN (176 aa)). Substrate contacts are provided by residues 68–75 (RGGQVTYH), 135–137 (ALG), and 148–150 (GVS). The active-site Acyl-thioester intermediate is the Cys-166.

It belongs to the LipB family.

It localises to the cytoplasm. The catalysed reaction is octanoyl-[ACP] + L-lysyl-[protein] = N(6)-octanoyl-L-lysyl-[protein] + holo-[ACP] + H(+). Its pathway is protein modification; protein lipoylation via endogenous pathway; protein N(6)-(lipoyl)lysine from octanoyl-[acyl-carrier-protein]: step 1/2. Catalyzes the transfer of endogenously produced octanoic acid from octanoyl-acyl-carrier-protein onto the lipoyl domains of lipoate-dependent enzymes. Lipoyl-ACP can also act as a substrate although octanoyl-ACP is likely to be the physiological substrate. This chain is Octanoyltransferase, found in Dechloromonas aromatica (strain RCB).